We begin with the raw amino-acid sequence, 133 residues long: Putative biopolymer transport protein ExbD-like 1 (133 aa).

Topologically, residues 1-15 (MNYDNYWDEDKPELN) are cytoplasmic. Residues 16–32 (ITPLVDVMLVLLAILMV) form a helical membrane-spanning segment. The Periplasmic portion of the chain corresponds to 33 to 133 (TTPTLTYKEE…FLKVSLITSP (101 aa)).

It belongs to the ExbD/TolR family.

Its subcellular location is the cell inner membrane. This chain is Putative biopolymer transport protein ExbD-like 1, found in Helicobacter pylori (strain ATCC 700392 / 26695) (Campylobacter pylori).